A 446-amino-acid polypeptide reads, in one-letter code: Alpha-galacturonidase (446 aa).

An NAD(+)-binding site is contributed by 10-72; it reads IKIAYIGGGS…GRWRYEAVST (63 aa). Position 151 (Asn-151) interacts with substrate. Cys-173 is a Mn(2+) binding site. His-174 (proton donor) is an active-site residue. His-210 serves as a coordination point for Mn(2+).

Belongs to the glycosyl hydrolase 4 family. Homotetramer. The cofactor is NAD(+). It depends on Mn(2+) as a cofactor.

The enzyme catalyses [(1-&gt;4)-alpha-D-galacturonosyl](n) + H2O = alpha-D-galacturonate + [(1-&gt;4)-alpha-D-galacturonosyl](n-1). Its function is as follows. Alpha-galacturonidase able to catalyze the hydrolysis of the chromogenic substrate p-nitrophenyl-alpha-D-galacturonic acid (pNPalphaGalUA), and of the probable natural substrate alpha-1,4-di-galacturonate (GalUA(2)). Can neither hydrolyze pNPbetaGalUA, nor the stereoisomeric pNPalphaGlcUA. Does not display alpha- or beta-glucosidase activity as it fails to hydrolyze melibiose, raffinose, lactose and the chromogenic analogs, pNPalphaGal and pNPbetaGal. Cannot use the following compounds as substrates: pNP-N-acetyl-alpha- and beta-D-galactosaminide, pNP-N-acetyl-alpha- and beta-D-glucosaminide, pNP-alpha-L- and beta-L-arabinopyranoside, pNP-alpha- and beta-D-glucuronide, pNP-alpha- and beta-D-glucopyranoside, pNP-alpha- and beta-D-glucopyranoside 6-phosphate, pNP-alpha-D-galactopyranoside 6-phosphate and oNP-beta-D-galactopyranoside 6-phosphate. The protein is Alpha-galacturonidase (lplD) of Bacillus subtilis (strain 168).